An 820-amino-acid polypeptide reads, in one-letter code: Leucine--tRNA ligase (820 aa).

The 'HIGH' region signature appears at 42 to 52 (PYPSGDLHMGH). Residues 576–580 (KMSKS) carry the 'KMSKS' region motif. Lysine 579 serves as a coordination point for ATP.

The protein belongs to the class-I aminoacyl-tRNA synthetase family.

The protein resides in the cytoplasm. It catalyses the reaction tRNA(Leu) + L-leucine + ATP = L-leucyl-tRNA(Leu) + AMP + diphosphate. This Coxiella burnetii (strain CbuG_Q212) (Coxiella burnetii (strain Q212)) protein is Leucine--tRNA ligase.